Consider the following 321-residue polypeptide: Transaldolase (321 aa).

The active-site Schiff-base intermediate with substrate is Lys132.

The protein belongs to the transaldolase family. Type 1 subfamily. In terms of assembly, homodimer.

Its subcellular location is the cytoplasm. The enzyme catalyses D-sedoheptulose 7-phosphate + D-glyceraldehyde 3-phosphate = D-erythrose 4-phosphate + beta-D-fructose 6-phosphate. The protein operates within carbohydrate degradation; pentose phosphate pathway; D-glyceraldehyde 3-phosphate and beta-D-fructose 6-phosphate from D-ribose 5-phosphate and D-xylulose 5-phosphate (non-oxidative stage): step 2/3. In terms of biological role, transaldolase is important for the balance of metabolites in the pentose-phosphate pathway. The polypeptide is Transaldolase (Rhizobium etli (strain CIAT 652)).